The chain runs to 122 residues: Large ribosomal subunit protein uL14 (122 aa).

The protein belongs to the universal ribosomal protein uL14 family. In terms of assembly, part of the 50S ribosomal subunit. Forms a cluster with proteins L3 and L19. In the 70S ribosome, L14 and L19 interact and together make contacts with the 16S rRNA in bridges B5 and B8.

Functionally, binds to 23S rRNA. Forms part of two intersubunit bridges in the 70S ribosome. This is Large ribosomal subunit protein uL14 from Desulforamulus reducens (strain ATCC BAA-1160 / DSM 100696 / MI-1) (Desulfotomaculum reducens).